The primary structure comprises 317 residues: Beta-ketoacyl-[acyl-carrier-protein] synthase III (317 aa).

Residues Cys112 and His244 contribute to the active site. The tract at residues 245 to 249 (QANLR) is ACP-binding. Asn274 is a catalytic residue.

Belongs to the thiolase-like superfamily. FabH family. Homodimer.

The protein resides in the cytoplasm. The enzyme catalyses malonyl-[ACP] + acetyl-CoA + H(+) = 3-oxobutanoyl-[ACP] + CO2 + CoA. It functions in the pathway lipid metabolism; fatty acid biosynthesis. Functionally, catalyzes the condensation reaction of fatty acid synthesis by the addition to an acyl acceptor of two carbons from malonyl-ACP. Catalyzes the first condensation reaction which initiates fatty acid synthesis and may therefore play a role in governing the total rate of fatty acid production. Possesses both acetoacetyl-ACP synthase and acetyl transacylase activities. Its substrate specificity determines the biosynthesis of branched-chain and/or straight-chain of fatty acids. This is Beta-ketoacyl-[acyl-carrier-protein] synthase III from Shigella sonnei (strain Ss046).